The sequence spans 1359 residues: DNA-directed RNA polymerase subunit beta (1359 aa).

This sequence belongs to the RNA polymerase beta chain family. The RNAP catalytic core consists of 2 alpha, 1 beta, 1 beta' and 1 omega subunit. When a sigma factor is associated with the core the holoenzyme is formed, which can initiate transcription.

The enzyme catalyses RNA(n) + a ribonucleoside 5'-triphosphate = RNA(n+1) + diphosphate. Its function is as follows. DNA-dependent RNA polymerase catalyzes the transcription of DNA into RNA using the four ribonucleoside triphosphates as substrates. The polypeptide is DNA-directed RNA polymerase subunit beta (Nitrosococcus oceani (strain ATCC 19707 / BCRC 17464 / JCM 30415 / NCIMB 11848 / C-107)).